Reading from the N-terminus, the 90-residue chain is Probable Fe(2+)-trafficking protein (90 aa).

This sequence belongs to the Fe(2+)-trafficking protein family.

Could be a mediator in iron transactions between iron acquisition and iron-requiring processes, such as synthesis and/or repair of Fe-S clusters in biosynthetic enzymes. This chain is Probable Fe(2+)-trafficking protein, found in Aliivibrio fischeri (strain ATCC 700601 / ES114) (Vibrio fischeri).